A 131-amino-acid chain; its full sequence is Protein NEGATIVE REGULATOR OF RESISTANCE (131 aa).

Disordered regions lie at residues 1–33 (MDATTTDATTAKRKRPAASDIADDAPTTVDEVS) and 51–131 (TRRL…RAPA). The Nuclear localization signal motif lies at 12 to 15 (KRKR). Positions 116 to 131 (PPSDAPATPRSARAPA) are enriched in low complexity.

This sequence belongs to the NPR1-interactor family. As to quaternary structure, interacts with NPR1/NH1. Interacts with NPR2/NH2.

It is found in the nucleus. Its function is as follows. Acts as a negative regulator of disease resistance. Acts on basal resistance, age-related resistance and resistance mediated by the LRR receptor kinase XA21. Plants over-expressing NRR display enhanced susceptibility to the bacterial blight Xanthomonas oryzae pv. oryzae (Xoo). This chain is Protein NEGATIVE REGULATOR OF RESISTANCE, found in Oryza sativa subsp. indica (Rice).